A 208-amino-acid polypeptide reads, in one-letter code: Uracil phosphoribosyltransferase (208 aa).

Residues Arg-78, Arg-103, and Asp-130–Thr-138 contribute to the 5-phospho-alpha-D-ribose 1-diphosphate site. Uracil is bound by residues Ile-193 and Gly-198–Ala-200. Residue Asp-199 participates in 5-phospho-alpha-D-ribose 1-diphosphate binding.

The protein belongs to the UPRTase family. The cofactor is Mg(2+).

It carries out the reaction UMP + diphosphate = 5-phospho-alpha-D-ribose 1-diphosphate + uracil. It participates in pyrimidine metabolism; UMP biosynthesis via salvage pathway; UMP from uracil: step 1/1. Its activity is regulated as follows. Allosterically activated by GTP. In terms of biological role, catalyzes the conversion of uracil and 5-phospho-alpha-D-ribose 1-diphosphate (PRPP) to UMP and diphosphate. The polypeptide is Uracil phosphoribosyltransferase (Oleidesulfovibrio alaskensis (strain ATCC BAA-1058 / DSM 17464 / G20) (Desulfovibrio alaskensis)).